The following is a 312-amino-acid chain: Ribosomal RNA small subunit methyltransferase H (312 aa).

Residues 32–34, Asp52, Phe79, Asp100, and Gln107 each bind S-adenosyl-L-methionine; that span reads AGH.

This sequence belongs to the methyltransferase superfamily. RsmH family.

The protein resides in the cytoplasm. It catalyses the reaction cytidine(1402) in 16S rRNA + S-adenosyl-L-methionine = N(4)-methylcytidine(1402) in 16S rRNA + S-adenosyl-L-homocysteine + H(+). In terms of biological role, specifically methylates the N4 position of cytidine in position 1402 (C1402) of 16S rRNA. This is Ribosomal RNA small subunit methyltransferase H from Listeria monocytogenes serovar 1/2a (strain ATCC BAA-679 / EGD-e).